We begin with the raw amino-acid sequence, 232 residues long: 5'-methylthioadenosine/S-adenosylhomocysteine nucleosidase (232 aa).

Residue Glu-12 is the Proton acceptor of the active site. Residues Gly-78, Ile-152, and 173-174 (ME) each bind substrate. Asp-197 acts as the Proton donor in catalysis.

It belongs to the PNP/UDP phosphorylase family. MtnN subfamily. Homodimer.

It catalyses the reaction S-adenosyl-L-homocysteine + H2O = S-(5-deoxy-D-ribos-5-yl)-L-homocysteine + adenine. The catalysed reaction is S-methyl-5'-thioadenosine + H2O = 5-(methylsulfanyl)-D-ribose + adenine. The enzyme catalyses 5'-deoxyadenosine + H2O = 5-deoxy-D-ribose + adenine. It functions in the pathway amino-acid biosynthesis; L-methionine biosynthesis via salvage pathway; S-methyl-5-thio-alpha-D-ribose 1-phosphate from S-methyl-5'-thioadenosine (hydrolase route): step 1/2. Its function is as follows. Catalyzes the irreversible cleavage of the glycosidic bond in both 5'-methylthioadenosine (MTA) and S-adenosylhomocysteine (SAH/AdoHcy) to adenine and the corresponding thioribose, 5'-methylthioribose and S-ribosylhomocysteine, respectively. Also cleaves 5'-deoxyadenosine, a toxic by-product of radical S-adenosylmethionine (SAM) enzymes, into 5-deoxyribose and adenine. Thus, is required for in vivo function of the radical SAM enzymes biotin synthase and lipoic acid synthase, that are inhibited by 5'-deoxyadenosine accumulation. The polypeptide is 5'-methylthioadenosine/S-adenosylhomocysteine nucleosidase (Erwinia tasmaniensis (strain DSM 17950 / CFBP 7177 / CIP 109463 / NCPPB 4357 / Et1/99)).